The following is a 431-amino-acid chain: Enolase (431 aa).

Residue Gln-167 participates in (2R)-2-phosphoglycerate binding. Glu-209 (proton donor) is an active-site residue. Residues Asp-246, Glu-290, and Asp-317 each coordinate Mg(2+). Residues Lys-342, Arg-371, Ser-372, and Lys-393 each coordinate (2R)-2-phosphoglycerate. The Proton acceptor role is filled by Lys-342.

It belongs to the enolase family. As to quaternary structure, component of the RNA degradosome, a multiprotein complex involved in RNA processing and mRNA degradation. Mg(2+) is required as a cofactor.

The protein localises to the cytoplasm. Its subcellular location is the secreted. It localises to the cell surface. It catalyses the reaction (2R)-2-phosphoglycerate = phosphoenolpyruvate + H2O. Its pathway is carbohydrate degradation; glycolysis; pyruvate from D-glyceraldehyde 3-phosphate: step 4/5. Functionally, catalyzes the reversible conversion of 2-phosphoglycerate (2-PG) into phosphoenolpyruvate (PEP). It is essential for the degradation of carbohydrates via glycolysis. The protein is Enolase of Yersinia pestis bv. Antiqua (strain Antiqua).